Reading from the N-terminus, the 372-residue chain is Chaperone protein DnaJ (372 aa).

One can recognise a J domain in the interval 5–70 (SYYDILGVSK…KKRQAYDQFG (66 aa)). Residues 140–218 (GREYKIEIPR…CGGQGLQEKR (79 aa)) form a CR-type zinc finger. The Zn(2+) site is built by Cys-153, Cys-156, Cys-170, Cys-173, Cys-192, Cys-195, Cys-206, and Cys-209. CXXCXGXG motif repeat units follow at residues 153–160 (CVDCNGSG), 170–177 (CPDCGGSG), 192–199 (CPTCRGKG), and 206–213 (CRSCGGQG).

Belongs to the DnaJ family. Homodimer. Zn(2+) is required as a cofactor.

It is found in the cytoplasm. Its function is as follows. Participates actively in the response to hyperosmotic and heat shock by preventing the aggregation of stress-denatured proteins and by disaggregating proteins, also in an autonomous, DnaK-independent fashion. Unfolded proteins bind initially to DnaJ; upon interaction with the DnaJ-bound protein, DnaK hydrolyzes its bound ATP, resulting in the formation of a stable complex. GrpE releases ADP from DnaK; ATP binding to DnaK triggers the release of the substrate protein, thus completing the reaction cycle. Several rounds of ATP-dependent interactions between DnaJ, DnaK and GrpE are required for fully efficient folding. Also involved, together with DnaK and GrpE, in the DNA replication of plasmids through activation of initiation proteins. This chain is Chaperone protein DnaJ, found in Leptospira interrogans serogroup Icterohaemorrhagiae serovar copenhageni (strain Fiocruz L1-130).